A 453-amino-acid polypeptide reads, in one-letter code: Carbamoyl phosphate synthase arginine-specific small chain (453 aa).

A mitochondrion-targeting transit peptide spans 1–28; that stretch reads MFARVFKAMPARAPAFTSVNASIQSRFM. Residues 219–406 enclose the Glutamine amidotransferase type-1 domain; that stretch reads HVAVIDCGVK…LDSVVKYKNH (188 aa). The active-site Nucleophile is Cys-295. Residues His-379 and Glu-381 contribute to the active site.

Belongs to the CarA family. In terms of assembly, heterodimer composed of 2 chains; the small (or glutamine) chain promotes the hydrolysis of glutamine to ammonia, which is used by the large (or ammonia) chain to synthesize carbamoyl phosphate.

The protein localises to the mitochondrion matrix. The catalysed reaction is hydrogencarbonate + L-glutamine + 2 ATP + H2O = carbamoyl phosphate + L-glutamate + 2 ADP + phosphate + 2 H(+). The enzyme catalyses L-glutamine + H2O = L-glutamate + NH4(+). It functions in the pathway amino-acid biosynthesis; L-arginine biosynthesis; carbamoyl phosphate from bicarbonate: step 1/1. Its function is as follows. Small subunit of the arginine-specific carbamoyl phosphate synthase (CPSase). CPSase catalyzes the formation of carbamoyl phosphate from the ammonia moiety of glutamine, carbonate, and phosphate donated by ATP, the first step of the arginine biosynthetic pathway. The small subunit (glutamine amidotransferase) binds and cleaves glutamine to supply the large subunit with the substrate ammonia. This chain is Carbamoyl phosphate synthase arginine-specific small chain (cpa1), found in Aspergillus niger (strain ATCC MYA-4892 / CBS 513.88 / FGSC A1513).